Here is a 177-residue protein sequence, read N- to C-terminus: tRNA-splicing endonuclease (177 aa).

Active-site residues include Tyr-114, His-123, and Lys-154.

The protein belongs to the tRNA-intron endonuclease family. Archaeal short subfamily. In terms of assembly, homotetramer; although the tetramer contains four active sites, only two participate in the cleavage. Therefore, it should be considered as a dimer of dimers.

The catalysed reaction is pretRNA = a 3'-half-tRNA molecule with a 5'-OH end + a 5'-half-tRNA molecule with a 2',3'-cyclic phosphate end + an intron with a 2',3'-cyclic phosphate and a 5'-hydroxyl terminus.. Its function is as follows. Endonuclease that removes tRNA introns. Cleaves pre-tRNA at the 5'- and 3'-splice sites to release the intron. The products are an intron and two tRNA half-molecules bearing 2',3' cyclic phosphate and 5'-OH termini. Recognizes a pseudosymmetric substrate in which 2 bulged loops of 3 bases are separated by a stem of 4 bp. The chain is tRNA-splicing endonuclease from Methanococcus maripaludis (strain DSM 14266 / JCM 13030 / NBRC 101832 / S2 / LL).